A 236-amino-acid polypeptide reads, in one-letter code: Leucyl/phenylalanyl-tRNA--protein transferase (236 aa).

This sequence belongs to the L/F-transferase family.

It is found in the cytoplasm. It catalyses the reaction N-terminal L-lysyl-[protein] + L-leucyl-tRNA(Leu) = N-terminal L-leucyl-L-lysyl-[protein] + tRNA(Leu) + H(+). The enzyme catalyses N-terminal L-arginyl-[protein] + L-leucyl-tRNA(Leu) = N-terminal L-leucyl-L-arginyl-[protein] + tRNA(Leu) + H(+). The catalysed reaction is L-phenylalanyl-tRNA(Phe) + an N-terminal L-alpha-aminoacyl-[protein] = an N-terminal L-phenylalanyl-L-alpha-aminoacyl-[protein] + tRNA(Phe). Functionally, functions in the N-end rule pathway of protein degradation where it conjugates Leu, Phe and, less efficiently, Met from aminoacyl-tRNAs to the N-termini of proteins containing an N-terminal arginine or lysine. The polypeptide is Leucyl/phenylalanyl-tRNA--protein transferase (Shewanella sediminis (strain HAW-EB3)).